The following is a 385-amino-acid chain: MNKWHINKWYFFVGMLVIFAVIISLILKDTSLTFSSYDREKFPHLIGNSMVKKPSLAGRLKIIEIDGRKTLGDQHGNPIQLRGMSTHGLQWFPQIINNNAFSALSKDWEANVIRLAMYVGEGGYSTDPSVKEKVIEGINLAIKNDMYVIVDWHILNPGDPNAKIYSGAKEFFKEIASKYPNDLHIIYELANEPNPTESDITNDIAGWEKVKKYAEPIIKMLRDMGNENIIIVGNPEWSTRPDLAVNDPIDDKNVMYSAHFYTGSASVWENGNKGHIARNIEKALENGLTVFVTEWGTSEASGDGGPYLNEADEWLEFLNSNNISWVNWSLANKNEASAAFLPTTSLDPGNGKVWAVNQLSLSGEYVRARIKGIPYKPISRETMGK.

A helical transmembrane segment spans residues 6–26 (INKWYFFVGMLVIFAVIISLI). Substrate-binding positions include His87, 91 to 92 (WF), Tyr118, and His153. Glu192 functions as the Proton donor in the catalytic mechanism. Substrate is bound at residue Tyr261. Residue Glu294 is the Nucleophile of the active site. Residues 300 to 301 (AS), Trp328, and 333 to 335 (KNE) each bind substrate.

The protein belongs to the glycosyl hydrolase 5 (cellulase A) family. Monomer.

The protein resides in the cell membrane. It catalyses the reaction Endohydrolysis of (1-&gt;4)-beta-D-glucosidic linkages in cellulose, lichenin and cereal beta-D-glucans.. Activity is enhanced by 1mM Mn(2+), but is not affected by 1mM Ca(2+), Mg(2+), Zn(2+), K(+), Na(+) or Li(+). Activity is not inhibited by EDTA (in vitro). Functionally, thermostable endoglucanase that has high activity with soluble polymeric substrates containing beta-1,4-glycosidic bonds, such as carboxymethyl cellulose (CMC) and barley beta-D-glucan (in vitro). Has no activity with cellobiose and filter paper. Has no activity with substrates containing beta-1,3-linked glycans, such as laminarin. Likewise, lacks activity with xylan, galactomannan and pectin. In Thermoanaerobacterium sp, this protein is Cellulase CelDZ1.